The chain runs to 614 residues: Fructokinase-like 2, chloroplastic (614 aa).

The N-terminal 44 residues, 1–44 (MASLSFTQFLSFPRCNADVPCLLQSHGFVKFRGERWNGKQSFSM), are a transit peptide targeting the chloroplast. 2 disordered regions span residues 47-75 (GRRKLSESAPLEEEGNDGNGAVVGKKPSK) and 542-592 (GYPP…YVMK). A compositionally biased stretch (acidic residues) spans 548–563 (DMEEEEDDEEEDEVES). A compositionally biased stretch (basic and acidic residues) spans 571–583 (ITEKEYRTSKPYD).

It belongs to the carbohydrate kinase PfkB family. As to quaternary structure, interacts with CITRX/TRXz. Binds to FLN1 and PTAC5. Associates with the plastid-encoded RNA polymerase (PEP) complex.

The protein resides in the plastid. The protein localises to the chloroplast. Functionally, required for proper chloroplast development, most likely through regulating plastid-encoded polymerase (PEP) dependent chloroplast transcription. Acts as a component of the transcriptionally active plastid chromosome that is required for plastid gene expression. The polypeptide is Fructokinase-like 2, chloroplastic (Arabidopsis thaliana (Mouse-ear cress)).